We begin with the raw amino-acid sequence, 37 residues long: Trypsin inhibitor 3 (37 aa).

Cystine bridges form between cysteine 4-cysteine 21, cysteine 11-cysteine 25, and cysteine 20-cysteine 36.

Trypsin inhibitor. The polypeptide is Trypsin inhibitor 3 (Spinacia oleracea (Spinach)).